A 359-amino-acid polypeptide reads, in one-letter code: 4-hydroxy-3-methylbut-2-en-1-yl diphosphate synthase (flavodoxin) (359 aa).

4 residues coordinate [4Fe-4S] cluster: cysteine 264, cysteine 267, cysteine 299, and glutamate 306.

Belongs to the IspG family. The cofactor is [4Fe-4S] cluster.

It carries out the reaction (2E)-4-hydroxy-3-methylbut-2-enyl diphosphate + oxidized [flavodoxin] + H2O + 2 H(+) = 2-C-methyl-D-erythritol 2,4-cyclic diphosphate + reduced [flavodoxin]. It participates in isoprenoid biosynthesis; isopentenyl diphosphate biosynthesis via DXP pathway; isopentenyl diphosphate from 1-deoxy-D-xylulose 5-phosphate: step 5/6. Its function is as follows. Converts 2C-methyl-D-erythritol 2,4-cyclodiphosphate (ME-2,4cPP) into 1-hydroxy-2-methyl-2-(E)-butenyl 4-diphosphate. This chain is 4-hydroxy-3-methylbut-2-en-1-yl diphosphate synthase (flavodoxin), found in Helicobacter pylori (strain G27).